The following is a 317-amino-acid chain: Tumor-associated calcium signal transducer 2 (317 aa).

A signal peptide spans 1-24 (MARGLDLAPLLLLLLAMATRFCTA). At 25–270 (QSNCTCPTNK…QFSMKRLTAG (246 aa)) the chain is on the extracellular side. N27 carries an N-linked (GlcNAc...) asparagine glycan. A Thyroglobulin type-1 domain is found at 64–139 (TSKCLLLKAR…TDKGDQSLRC (76 aa)). 3 cysteine pairs are disulfide-bonded: C67–C102, C113–C119, and C121–C139. N114 carries an N-linked (GlcNAc...) asparagine glycan. 2 N-linked (GlcNAc...) asparagine glycosylation sites follow: N162 and N202. The chain crosses the membrane as a helical span at residues 271–291 (VIAVIAVVSVAVVAGVVVLVV). The Cytoplasmic segment spans residues 292–317 (TKRRKSGKYKKVELKELGEMRSEPSL).

Belongs to the EPCAM family. In terms of tissue distribution, expressed in kidney, lung, ovary and testis. High levels of expression in immortalized keratinocytes.

Its subcellular location is the membrane. Functionally, may function as a growth factor receptor. The polypeptide is Tumor-associated calcium signal transducer 2 (Tacstd2) (Mus musculus (Mouse)).